A 688-amino-acid chain; its full sequence is G protein-coupled receptor kinase 3 (688 aa).

Positions 1 to 190 (MADLEAVLAD…ELNIHLSMND (190 aa)) are N-terminal. Positions 54 to 175 (TFDKIFNQKI…MESDKFTRFC (122 aa)) constitute an RGS domain. One can recognise a Protein kinase domain in the interval 191 to 453 (FSVHRIIGRG…ARELKEHIFF (263 aa)). ATP is bound by residues 197–205 (IGRGGFGEV) and Lys-220. Asp-317 acts as the Proton acceptor in catalysis. Positions 454 to 521 (KGIDWQHVYL…VISERWQQEV (68 aa)) constitute an AGC-kinase C-terminal domain. Residues 558–652 (DCIMHGYMLK…WLKELTCTFN (95 aa)) form the PH domain.

This sequence belongs to the protein kinase superfamily. AGC Ser/Thr protein kinase family. GPRK subfamily. Interacts with GIT1. Post-translationally, ubiquitinated.

The protein localises to the postsynapse. Its subcellular location is the presynapse. It catalyses the reaction [beta-adrenergic receptor] + ATP = [beta-adrenergic receptor]-phosphate + ADP + H(+). Functionally, specifically phosphorylates the agonist-occupied form of the beta-adrenergic and closely related receptors. In Mus musculus (Mouse), this protein is G protein-coupled receptor kinase 3.